Reading from the N-terminus, the 467-residue chain is UDP-glycosyltransferase 90A2 (467 aa).

UDP-alpha-D-glucose contacts are provided by residues serine 289, 341–343 (VDQ), 358–366 (HCGWNSLTE), and 380–383 (AAEQ).

This sequence belongs to the UDP-glycosyltransferase family.

The sequence is that of UDP-glycosyltransferase 90A2 (UGT90A2) from Arabidopsis thaliana (Mouse-ear cress).